Consider the following 310-residue polypeptide: Low affinity immunoglobulin gamma Fc region receptor II-b (310 aa).

Positions 1–42 (MGILSFLPVLATESDWADCKSPQPWGHMLLWTAVLFLAPVAG) are cleaved as a signal peptide. Residues 43–217 (TPAAPPKAVL…KPVTITVQAP (175 aa)) lie on the Extracellular side of the membrane. Ig-like C2-type domains lie at 48-127 (PKAV…VHLT) and 131-213 (EWLV…VTIT). 2 disulfides stabilise this stretch: cysteine 71–cysteine 113 and cysteine 152–cysteine 196. N-linked (GlcNAc...) asparagine glycans are attached at residues asparagine 106, asparagine 180, and asparagine 187. The chain crosses the membrane as a helical span at residues 218-240 (SSSPMGIIVAVVTGIAVAAIVAA). Over 241–310 (VVALIYCRKK…LEEPDDQNRI (70 aa)) the chain is Cytoplasmic. Positions 290 to 295 (ITYSLL) match the ITIM motif motif. Tyrosine 292 bears the Phosphotyrosine; by SRC-type Tyr-kinases mark.

In terms of assembly, interacts with INPP5D/SHIP1. Interacts with FGR. Interacts with LYN. As to quaternary structure, (Microbial infection) Isoform IIB1 interacts with measles virus protein N. Protein N is released in the blood following lysis of measles infected cells. This interaction presumably block inflammatory immune response. Post-translationally, phosphorylated by the SRC-type Tyr-kinases LYN and BLK. As to expression, is the most broadly distributed Fc-gamma-receptor. Expressed in monocyte, neutrophils, macrophages, basophils, eosinophils, Langerhans cells, B-cells, platelets cells and placenta (endothelial cells). Not detected in natural killer cells.

It localises to the cell membrane. Functionally, receptor for the Fc region of complexed or aggregated immunoglobulins gamma. Low affinity receptor. Involved in a variety of effector and regulatory functions such as phagocytosis of immune complexes and modulation of antibody production by B-cells. Binding to this receptor results in down-modulation of previous state of cell activation triggered via antigen receptors on B-cells (BCR), T-cells (TCR) or via another Fc receptor. Isoform IIB1 fails to mediate endocytosis or phagocytosis. Isoform IIB2 does not trigger phagocytosis. The chain is Low affinity immunoglobulin gamma Fc region receptor II-b (FCGR2B) from Homo sapiens (Human).